A 157-amino-acid chain; its full sequence is Phosphopantetheine adenylyltransferase (157 aa).

Position 8 (Ser8) interacts with substrate. ATP is bound by residues 8 to 9 and His16; that span reads SF. Substrate contacts are provided by Lys40, Thr72, and Arg86. ATP is bound by residues 87 to 89, Glu97, and 122 to 128; these read GLR and YSFLSSS.

The protein belongs to the bacterial CoaD family. As to quaternary structure, homohexamer. Mg(2+) serves as cofactor.

Its subcellular location is the cytoplasm. It catalyses the reaction (R)-4'-phosphopantetheine + ATP + H(+) = 3'-dephospho-CoA + diphosphate. Its pathway is cofactor biosynthesis; coenzyme A biosynthesis; CoA from (R)-pantothenate: step 4/5. Its function is as follows. Reversibly transfers an adenylyl group from ATP to 4'-phosphopantetheine, yielding dephospho-CoA (dPCoA) and pyrophosphate. This chain is Phosphopantetheine adenylyltransferase, found in Crocosphaera subtropica (strain ATCC 51142 / BH68) (Cyanothece sp. (strain ATCC 51142)).